A 296-amino-acid polypeptide reads, in one-letter code: Zinc finger CCCH-type antiviral protein 1-like (296 aa).

A2 bears the N-acetylalanine mark. C3H1-type zinc fingers lie at residues 111 to 136 (LCRR…HDIH) and 198 to 219 (VCKS…HQLI).

In Mus musculus (Mouse), this protein is Zinc finger CCCH-type antiviral protein 1-like (Zc3hav1l).